Consider the following 437-residue polypeptide: MKPLIAIVGRPNVGKSMLFNRILREKSAIVDSTPGVTRDRHISPGEWQGKQFLLMDTGGYCPEGDVISMAMLEQTLMAIRDADIILFLADVRSGLTYDDLEISKLLQRTFQHKQIFFAVNKVETPQLSIDAESFVSTGFTKPYFVSARDGSGVAELLDDMLDSLPVQEKQLVEKDLPTNLAVVGRPNVGKSSFVNALLGANRLIVSDIPGTTRDAIDSRFTRKKQDFVLIDTAGLRKRTKIDAGIEYYSSLRTDKAIERCDVALVMIDARTGIENQDMKIINMAVERKRGVLLLINKWDLVEKDSKTSAHYEKEVRSHMGNLAYIPLLFISALTKKNLYRAIDTAQEISENRSRKITTSALNRFLEVALAEKHPSTKSGKELKIKYMTQIEAPWPVFAFFCNDPELLQTNFRKFLENKLREHFKLEGVTVSLRFFKK.

EngA-type G domains follow at residues 3-168 and 178-353; these read PLIA…PVQE and TNLA…ENRS. Residues 9–16, 56–60, 120–123, 184–191, 231–235, and 296–299 contribute to the GTP site; these read GRPNVGKS, DTGGY, NKVE, DTAGL, and NKWD. In terms of domain architecture, KH-like spans 354-437; sequence RKITTSALNR…VTVSLRFFKK (84 aa).

Belongs to the TRAFAC class TrmE-Era-EngA-EngB-Septin-like GTPase superfamily. EngA (Der) GTPase family. Associates with the 50S ribosomal subunit.

Functionally, GTPase that plays an essential role in the late steps of ribosome biogenesis. The polypeptide is GTPase Der (Chlorobium phaeobacteroides (strain DSM 266 / SMG 266 / 2430)).